A 143-amino-acid chain; its full sequence is Peptide methionine sulfoxide reductase B8 (143 aa).

One can recognise a MsrB domain in the interval 18 to 139 (DEEWRAVLSP…NSVSLKFASA (122 aa)). Zn(2+) contacts are provided by Cys57, Cys60, Cys103, and Cys106. Cys75 and Cys128 are disulfide-bonded. The active-site Nucleophile is the Cys128.

This sequence belongs to the MsrB Met sulfoxide reductase family. Zn(2+) serves as cofactor.

Its subcellular location is the cytoplasm. It localises to the cytosol. The enzyme catalyses L-methionyl-[protein] + [thioredoxin]-disulfide + H2O = L-methionyl-(R)-S-oxide-[protein] + [thioredoxin]-dithiol. In terms of biological role, catalyzes the reduction of methionine sulfoxide (MetSO) to methionine in proteins. Plays a protective role against oxidative stress by restoring activity to proteins that have been inactivated by methionine oxidation. MSRB family specifically reduces the MetSO R-enantiomer. The protein is Peptide methionine sulfoxide reductase B8 (MSRB8) of Arabidopsis thaliana (Mouse-ear cress).